An 846-amino-acid chain; its full sequence is Major vault protein beta (846 aa).

Residue A2 is modified to N-acetylalanine. MVP repeat units lie at residues 2-60 (ATPV…IPPR), 61-115 (QYCI…QPVP), 116-172 (LQVI…EPVR), 173-225 (AVII…GFIQ), 226-280 (ALVL…RDIK), 281-332 (AITL…IQNV), 333-388 (NVLS…RRKR), 389-458 (IPLD…STKV), and 459-521 (ITYR…FLGP).

In terms of assembly, the vault ribonucleoprotein particle is a huge (400 A x 670 A) cage structure of 12.9 MDa. It consists of a dimer of half-vaults, with each half-vault comprising 39 identical major vault protein (MVP) chains. Dictyostelium is one of the few organisms in which the major component is actually two proteins (alpha and beta).

The protein resides in the cytoplasm. Its subcellular location is the nucleus. Functionally, unknown, though MVP-beta is required for normal vault structure. The sequence is that of Major vault protein beta (mvpB) from Dictyostelium discoideum (Social amoeba).